Reading from the N-terminus, the 638-residue chain is 1-deoxy-D-xylulose-5-phosphate synthase (638 aa).

Thiamine diphosphate is bound by residues His-79 and 120–122; that span reads AHS. Asp-151 lines the Mg(2+) pocket. Residues 152-153, Asn-180, Tyr-289, and Glu-371 each bind thiamine diphosphate; that span reads GA. Residue Asn-180 participates in Mg(2+) binding.

This sequence belongs to the transketolase family. DXPS subfamily. In terms of assembly, homodimer. Mg(2+) is required as a cofactor. Thiamine diphosphate serves as cofactor.

It carries out the reaction D-glyceraldehyde 3-phosphate + pyruvate + H(+) = 1-deoxy-D-xylulose 5-phosphate + CO2. The protein operates within metabolic intermediate biosynthesis; 1-deoxy-D-xylulose 5-phosphate biosynthesis; 1-deoxy-D-xylulose 5-phosphate from D-glyceraldehyde 3-phosphate and pyruvate: step 1/1. Its function is as follows. Catalyzes the acyloin condensation reaction between C atoms 2 and 3 of pyruvate and glyceraldehyde 3-phosphate to yield 1-deoxy-D-xylulose-5-phosphate (DXP). The protein is 1-deoxy-D-xylulose-5-phosphate synthase of Rhizobium rhizogenes (strain K84 / ATCC BAA-868) (Agrobacterium radiobacter).